A 335-amino-acid chain; its full sequence is Methionine import ATP-binding protein MetN 1 (335 aa).

The ABC transporter domain occupies 2 to 242 (IEFQNVHKTY…PKHPTTRRFV (241 aa)). Position 38–45 (38–45 (GHSGAGKS)) interacts with ATP.

This sequence belongs to the ABC transporter superfamily. Methionine importer (TC 3.A.1.24) family. As to quaternary structure, the complex is composed of two ATP-binding proteins (MetN), two transmembrane proteins (MetI) and a solute-binding protein (MetQ).

The protein localises to the cell inner membrane. The catalysed reaction is L-methionine(out) + ATP + H2O = L-methionine(in) + ADP + phosphate + H(+). The enzyme catalyses D-methionine(out) + ATP + H2O = D-methionine(in) + ADP + phosphate + H(+). In terms of biological role, part of the ABC transporter complex MetNIQ involved in methionine import. Responsible for energy coupling to the transport system. In Pseudomonas fluorescens (strain ATCC BAA-477 / NRRL B-23932 / Pf-5), this protein is Methionine import ATP-binding protein MetN 1.